Reading from the N-terminus, the 405-residue chain is Arginine biosynthesis bifunctional protein ArgJ (405 aa).

Substrate-binding residues include Thr-155, Lys-181, Thr-192, Glu-278, Asn-400, and Thr-405. Thr-192 acts as the Nucleophile in catalysis.

Belongs to the ArgJ family. As to quaternary structure, heterotetramer of two alpha and two beta chains.

The protein resides in the cytoplasm. It carries out the reaction N(2)-acetyl-L-ornithine + L-glutamate = N-acetyl-L-glutamate + L-ornithine. The enzyme catalyses L-glutamate + acetyl-CoA = N-acetyl-L-glutamate + CoA + H(+). It participates in amino-acid biosynthesis; L-arginine biosynthesis; L-ornithine and N-acetyl-L-glutamate from L-glutamate and N(2)-acetyl-L-ornithine (cyclic): step 1/1. It functions in the pathway amino-acid biosynthesis; L-arginine biosynthesis; N(2)-acetyl-L-ornithine from L-glutamate: step 1/4. Catalyzes two activities which are involved in the cyclic version of arginine biosynthesis: the synthesis of N-acetylglutamate from glutamate and acetyl-CoA as the acetyl donor, and of ornithine by transacetylation between N(2)-acetylornithine and glutamate. This chain is Arginine biosynthesis bifunctional protein ArgJ, found in Dehalococcoides mccartyi (strain CBDB1).